Here is a 398-residue protein sequence, read N- to C-terminus: 4-hydroxy-3-methylbut-2-enyl diphosphate reductase (398 aa).

C66 provides a ligand contact to [4Fe-4S] cluster. Position 96 (H96) interacts with (2E)-4-hydroxy-3-methylbut-2-enyl diphosphate. H96 contributes to the dimethylallyl diphosphate binding site. H96 is an isopentenyl diphosphate binding site. C157 provides a ligand contact to [4Fe-4S] cluster. A (2E)-4-hydroxy-3-methylbut-2-enyl diphosphate-binding site is contributed by H185. Residue H185 participates in dimethylallyl diphosphate binding. Position 185 (H185) interacts with isopentenyl diphosphate. Residue E187 is the Proton donor of the active site. T250 lines the (2E)-4-hydroxy-3-methylbut-2-enyl diphosphate pocket. Residue C288 participates in [4Fe-4S] cluster binding. (2E)-4-hydroxy-3-methylbut-2-enyl diphosphate-binding residues include S317, S318, N319, and S380. Dimethylallyl diphosphate-binding residues include S317, S318, N319, and S380. The isopentenyl diphosphate site is built by S317, S318, N319, and S380.

The protein belongs to the IspH family. The cofactor is [4Fe-4S] cluster.

The catalysed reaction is isopentenyl diphosphate + 2 oxidized [2Fe-2S]-[ferredoxin] + H2O = (2E)-4-hydroxy-3-methylbut-2-enyl diphosphate + 2 reduced [2Fe-2S]-[ferredoxin] + 2 H(+). It catalyses the reaction dimethylallyl diphosphate + 2 oxidized [2Fe-2S]-[ferredoxin] + H2O = (2E)-4-hydroxy-3-methylbut-2-enyl diphosphate + 2 reduced [2Fe-2S]-[ferredoxin] + 2 H(+). It functions in the pathway isoprenoid biosynthesis; dimethylallyl diphosphate biosynthesis; dimethylallyl diphosphate from (2E)-4-hydroxy-3-methylbutenyl diphosphate: step 1/1. The protein operates within isoprenoid biosynthesis; isopentenyl diphosphate biosynthesis via DXP pathway; isopentenyl diphosphate from 1-deoxy-D-xylulose 5-phosphate: step 6/6. Functionally, catalyzes the conversion of 1-hydroxy-2-methyl-2-(E)-butenyl 4-diphosphate (HMBPP) into a mixture of isopentenyl diphosphate (IPP) and dimethylallyl diphosphate (DMAPP). Acts in the terminal step of the DOXP/MEP pathway for isoprenoid precursor biosynthesis. This is 4-hydroxy-3-methylbut-2-enyl diphosphate reductase from Prochlorococcus marinus subsp. pastoris (strain CCMP1986 / NIES-2087 / MED4).